The following is a 356-amino-acid chain: DNA polymerase IV (356 aa).

The UmuC domain occupies 7 to 188 (IIHIDMDCFY…LPLKKISGVG (182 aa)). Mg(2+) is bound by residues Asp11 and Asp106. Glu107 is a catalytic residue.

Belongs to the DNA polymerase type-Y family. Monomer. Requires Mg(2+) as cofactor.

Its subcellular location is the cytoplasm. The enzyme catalyses DNA(n) + a 2'-deoxyribonucleoside 5'-triphosphate = DNA(n+1) + diphosphate. Its function is as follows. Poorly processive, error-prone DNA polymerase involved in untargeted mutagenesis. Copies undamaged DNA at stalled replication forks, which arise in vivo from mismatched or misaligned primer ends. These misaligned primers can be extended by PolIV. Exhibits no 3'-5' exonuclease (proofreading) activity. May be involved in translesional synthesis, in conjunction with the beta clamp from PolIII. The polypeptide is DNA polymerase IV (Glaesserella parasuis serovar 5 (strain SH0165) (Haemophilus parasuis)).